A 77-amino-acid chain; its full sequence is Exodeoxyribonuclease 7 small subunit (77 aa).

The protein belongs to the XseB family. Heterooligomer composed of large and small subunits.

The protein resides in the cytoplasm. The catalysed reaction is Exonucleolytic cleavage in either 5'- to 3'- or 3'- to 5'-direction to yield nucleoside 5'-phosphates.. Bidirectionally degrades single-stranded DNA into large acid-insoluble oligonucleotides, which are then degraded further into small acid-soluble oligonucleotides. This chain is Exodeoxyribonuclease 7 small subunit, found in Chromobacterium violaceum (strain ATCC 12472 / DSM 30191 / JCM 1249 / CCUG 213 / NBRC 12614 / NCIMB 9131 / NCTC 9757 / MK).